Here is a 271-residue protein sequence, read N- to C-terminus: Neurexophilin-1 (271 aa).

The signal sequence occupies residues 1-21 (MQAACWYVLLLLQPTVYLVTC). The interval 22–97 (ANLTNGGKSE…WDWLRNSTDL (76 aa)) is II. 6 N-linked (GlcNAc...) asparagine glycosylation sites follow: N23, N68, N93, N146, N156, and N162. Residues 98–176 (QEPRPRAKRR…LVPPTKIVEF (79 aa)) form an III region. Residues 177–185 (DLAQQTVID) form an IV (linker domain) region. The v (Cys-rich) stretch occupies residues 186-271 (AKDSKSFNCR…HSDTPYFPSG (86 aa)).

The protein belongs to the neurexophilin family. In terms of processing, may be proteolytically processed at the boundary between the N-terminal non-conserved and the central conserved domain in neuron-like cells. In terms of tissue distribution, brain, only in a scattered subpopulation of neurons that probably represent inhibitory interneurons.

It is found in the secreted. In terms of biological role, may be signaling molecules that resemble neuropeptides. Ligand for alpha-neurexins. The protein is Neurexophilin-1 (Nxph1) of Mus musculus (Mouse).